A 269-amino-acid polypeptide reads, in one-letter code: Energy-coupling factor transporter ATP-binding protein EcfA1 (269 aa).

An ABC transporter domain is found at I8–D242. G42–S49 lines the ATP pocket.

Belongs to the ABC transporter superfamily. Energy-coupling factor EcfA family. As to quaternary structure, forms a stable energy-coupling factor (ECF) transporter complex composed of 2 membrane-embedded substrate-binding proteins (S component), 2 ATP-binding proteins (A component) and 2 transmembrane proteins (T component).

It localises to the cell membrane. Its function is as follows. ATP-binding (A) component of a common energy-coupling factor (ECF) ABC-transporter complex. Unlike classic ABC transporters this ECF transporter provides the energy necessary to transport a number of different substrates. In Staphylococcus epidermidis (strain ATCC 35984 / DSM 28319 / BCRC 17069 / CCUG 31568 / BM 3577 / RP62A), this protein is Energy-coupling factor transporter ATP-binding protein EcfA1.